The sequence spans 228 residues: Cytidylate kinase (228 aa).

Residue Gly-12–Thr-20 participates in ATP binding.

This sequence belongs to the cytidylate kinase family. Type 1 subfamily.

The protein localises to the cytoplasm. The enzyme catalyses CMP + ATP = CDP + ADP. The catalysed reaction is dCMP + ATP = dCDP + ADP. The polypeptide is Cytidylate kinase (Pseudomonas putida (strain W619)).